The chain runs to 268 residues: Small ribosomal subunit protein uS2 (268 aa).

The protein belongs to the universal ribosomal protein uS2 family.

This Coprothermobacter proteolyticus (strain ATCC 35245 / DSM 5265 / OCM 4 / BT) protein is Small ribosomal subunit protein uS2.